Here is a 221-residue protein sequence, read N- to C-terminus: Octanoyltransferase (221 aa).

The BPL/LPL catalytic domain occupies 14–202 (GVRPDTLWFL…MLGARNAPHP (189 aa)). Substrate is bound by residues 54–61 (RGGLLTYH), 128–130 (SIG), and 141–143 (GFA). Catalysis depends on cysteine 159, which acts as the Acyl-thioester intermediate. Residues 197–221 (RNAPHPPAPNLSSGDLGTGTRAGRT) form a disordered region.

The protein belongs to the LipB family.

It is found in the cytoplasm. The enzyme catalyses octanoyl-[ACP] + L-lysyl-[protein] = N(6)-octanoyl-L-lysyl-[protein] + holo-[ACP] + H(+). The protein operates within protein modification; protein lipoylation via endogenous pathway; protein N(6)-(lipoyl)lysine from octanoyl-[acyl-carrier-protein]: step 1/2. In terms of biological role, catalyzes the transfer of endogenously produced octanoic acid from octanoyl-acyl-carrier-protein onto the lipoyl domains of lipoate-dependent enzymes. Lipoyl-ACP can also act as a substrate although octanoyl-ACP is likely to be the physiological substrate. The chain is Octanoyltransferase from Frankia casuarinae (strain DSM 45818 / CECT 9043 / HFP020203 / CcI3).